A 183-amino-acid polypeptide reads, in one-letter code: Transmembrane protein 252 (183 aa).

2 helical membrane passes run 8 to 28 (ILCA…GFFI) and 39 to 59 (LVVA…GIFW).

It localises to the membrane. The sequence is that of Transmembrane protein 252 (Tmem252) from Mus musculus (Mouse).